The chain runs to 396 residues: Maltose/maltodextrin-binding periplasmic protein (396 aa).

The N-terminal stretch at 1-26 (MKIKTGARILALSALTTMMFSASALA) is a signal peptide.

The protein belongs to the bacterial solute-binding protein 1 family. The complex is composed of two ATP-binding proteins (MalK), two transmembrane proteins (MalG and MalF) and a solute-binding protein (MalE).

The protein resides in the periplasm. Part of the ABC transporter complex MalEFGK involved in maltose/maltodextrin import. Binds maltose and higher maltodextrins. The polypeptide is Maltose/maltodextrin-binding periplasmic protein (malE) (Klebsiella aerogenes (Enterobacter aerogenes)).